A 593-amino-acid polypeptide reads, in one-letter code: BBSome complex member BBS1 (593 aa).

Ala2 is subject to N-acetylalanine.

In terms of assembly, part of BBSome complex, that contains BBS1, BBS2, BBS4, BBS5, BBS7, BBS8/TTC8, BBS9 and BBIP10. Interacts with the C-terminus of RAB3IP. Interacts with CCDC28B and ALDOB. Interacts with PKD1.

The protein localises to the cell projection. It localises to the cilium membrane. Its subcellular location is the cytoplasm. It is found in the cytoskeleton. The protein resides in the microtubule organizing center. The protein localises to the centrosome. It localises to the centriolar satellite. Functionally, the BBSome complex is thought to function as a coat complex required for sorting of specific membrane proteins to the primary cilia. The BBSome complex is required for ciliogenesis but is dispensable for centriolar satellite function. This ciliogenic function is mediated in part by the Rab8 GDP/GTP exchange factor, which localizes to the basal body and contacts the BBSome. Rab8(GTP) enters the primary cilium and promotes extension of the ciliary membrane. Firstly the BBSome associates with the ciliary membrane and binds to RAB3IP/Rabin8, the guanosyl exchange factor (GEF) for Rab8 and then the Rab8-GTP localizes to the cilium and promotes docking and fusion of carrier vesicles to the base of the ciliary membrane. The BBSome complex, together with the LTZL1, controls SMO ciliary trafficking and contributes to the sonic hedgehog (SHH) pathway regulation. Required for proper BBSome complex assembly. Plays a role in olfactory cilium biogenesis/maintenance and trafficking and is essential for the localization of the BBSome complex in the olfactory sensory neurons cilia. The protein is BBSome complex member BBS1 (Bbs1) of Mus musculus (Mouse).